The primary structure comprises 457 residues: Bifunctional protein GlmU (457 aa).

Residues 1–232 (MNNLAAVILA…PAEVMGINDR (232 aa)) form a pyrophosphorylase region. Residues 9-12 (LAAG), lysine 23, glutamine 75, and 80-81 (GT) each bind UDP-N-acetyl-alpha-D-glucosamine. Aspartate 105 serves as a coordination point for Mg(2+). Positions 142, 157, 172, and 230 each coordinate UDP-N-acetyl-alpha-D-glucosamine. Asparagine 230 provides a ligand contact to Mg(2+). A linker region spans residues 233–253 (AQLAEAGQLLRGRINKALMLD). Residues 254 to 457 (GTTLIDPQTT…NKEGWKLKKK (204 aa)) are N-acetyltransferase. Positions 336 and 354 each coordinate UDP-N-acetyl-alpha-D-glucosamine. Histidine 366 (proton acceptor) is an active-site residue. UDP-N-acetyl-alpha-D-glucosamine-binding residues include tyrosine 369 and asparagine 380. Residues 389–390 (NY), serine 408, alanine 426, and arginine 443 each bind acetyl-CoA.

This sequence in the N-terminal section; belongs to the N-acetylglucosamine-1-phosphate uridyltransferase family. The protein in the C-terminal section; belongs to the transferase hexapeptide repeat family. In terms of assembly, homotrimer. Mg(2+) is required as a cofactor.

It localises to the cytoplasm. It carries out the reaction alpha-D-glucosamine 1-phosphate + acetyl-CoA = N-acetyl-alpha-D-glucosamine 1-phosphate + CoA + H(+). The enzyme catalyses N-acetyl-alpha-D-glucosamine 1-phosphate + UTP + H(+) = UDP-N-acetyl-alpha-D-glucosamine + diphosphate. Its pathway is nucleotide-sugar biosynthesis; UDP-N-acetyl-alpha-D-glucosamine biosynthesis; N-acetyl-alpha-D-glucosamine 1-phosphate from alpha-D-glucosamine 6-phosphate (route II): step 2/2. The protein operates within nucleotide-sugar biosynthesis; UDP-N-acetyl-alpha-D-glucosamine biosynthesis; UDP-N-acetyl-alpha-D-glucosamine from N-acetyl-alpha-D-glucosamine 1-phosphate: step 1/1. It participates in bacterial outer membrane biogenesis; LPS lipid A biosynthesis. Functionally, catalyzes the last two sequential reactions in the de novo biosynthetic pathway for UDP-N-acetylglucosamine (UDP-GlcNAc). The C-terminal domain catalyzes the transfer of acetyl group from acetyl coenzyme A to glucosamine-1-phosphate (GlcN-1-P) to produce N-acetylglucosamine-1-phosphate (GlcNAc-1-P), which is converted into UDP-GlcNAc by the transfer of uridine 5-monophosphate (from uridine 5-triphosphate), a reaction catalyzed by the N-terminal domain. This is Bifunctional protein GlmU from Geotalea uraniireducens (strain Rf4) (Geobacter uraniireducens).